Here is a 310-residue protein sequence, read N- to C-terminus: HPr kinase/phosphorylase (310 aa).

Active-site residues include histidine 138 and lysine 159. 153–160 provides a ligand contact to ATP; that stretch reads GKSGVGKS. Mg(2+) is bound at residue serine 160. The active-site Proton acceptor; for phosphorylation activity. Proton donor; for dephosphorylation activity is the aspartate 177. Positions 201–210 are important for the catalytic mechanism of both phosphorylation and dephosphorylation; sequence LEIRGLGIIN. Residue glutamate 202 coordinates Mg(2+). Arginine 243 is a catalytic residue. The segment at 264–269 is important for the catalytic mechanism of dephosphorylation; it reads PVRPGR.

Belongs to the HPrK/P family. In terms of assembly, homohexamer. Mg(2+) is required as a cofactor.

The catalysed reaction is [HPr protein]-L-serine + ATP = [HPr protein]-O-phospho-L-serine + ADP + H(+). It catalyses the reaction [HPr protein]-O-phospho-L-serine + phosphate + H(+) = [HPr protein]-L-serine + diphosphate. Its function is as follows. Catalyzes the ATP- as well as the pyrophosphate-dependent phosphorylation of a specific serine residue in HPr, a phosphocarrier protein of the phosphoenolpyruvate-dependent sugar phosphotransferase system (PTS). HprK/P also catalyzes the pyrophosphate-producing, inorganic phosphate-dependent dephosphorylation (phosphorolysis) of seryl-phosphorylated HPr (P-Ser-HPr). The two antagonistic activities of HprK/P are regulated by several intracellular metabolites, which change their concentration in response to the absence or presence of rapidly metabolisable carbon sources (glucose, fructose, etc.) in the growth medium. Also phosphorylates/dephosphorylates the HPr-like catabolite repression protein crh on a specific serine residue. Therefore, by controlling the phosphorylation state of HPr and crh, HPrK/P is a sensor enzyme that plays a major role in the regulation of carbon metabolism and sugar transport: it mediates carbon catabolite repression (CCR), and regulates PTS-catalyzed carbohydrate uptake and inducer exclusion. The protein is HPr kinase/phosphorylase of Bacillus pumilus (strain SAFR-032).